The sequence spans 104 residues: A-type ATP synthase subunit F (104 aa).

The protein belongs to the V-ATPase F subunit family. Has multiple subunits with at least A(3), B(3), C, D, E, F, H, I and proteolipid K(x).

It is found in the cell membrane. Its function is as follows. Component of the A-type ATP synthase that produces ATP from ADP in the presence of a proton gradient across the membrane. This is A-type ATP synthase subunit F from Thermoplasma volcanium (strain ATCC 51530 / DSM 4299 / JCM 9571 / NBRC 15438 / GSS1).